Reading from the N-terminus, the 438-residue chain is 2-(3-amino-3-carboxypropyl)histidine synthase subunit 1 (438 aa).

The segment at 1–24 (MAALVVSETAEPGSRVGPGRGRIS) is disordered. [4Fe-4S] cluster contacts are provided by Cys-110, Cys-214, and Cys-342. A disordered region spans residues 402–438 (LCQPASDKVQQGSRGGSPAPACESCNCADQKATSPAP). The residue at position 418 (Ser-418) is a Phosphoserine.

It belongs to the DPH1/DPH2 family. DPH1 subfamily. Component of the 2-(3-amino-3-carboxypropyl)histidine synthase complex composed of DPH1, DPH2, DPH3 and a NADH-dependent reductase. Interacts with DPH2. Interacts with RBM8A. It depends on [4Fe-4S] cluster as a cofactor. As to expression, strongly expressed in kidney and liver. Moderately expressed in brain, skin and testis. Weakly expressed in heart, lung, small intestine, spleen, stomach and thymus.

It localises to the nucleus. It is found in the cytoplasm. The enzyme catalyses L-histidyl-[translation elongation factor 2] + S-adenosyl-L-methionine = 2-[(3S)-amino-3-carboxypropyl]-L-histidyl-[translation elongation factor 2] + S-methyl-5'-thioadenosine + H(+). The protein operates within protein modification; peptidyl-diphthamide biosynthesis. Functionally, catalyzes the first step of diphthamide biosynthesis, a post-translational modification of histidine which occurs in elongation factor 2. DPH1 and DPH2 transfer a 3-amino-3-carboxypropyl (ACP) group from S-adenosyl-L-methionine (SAM) to a histidine residue, the reaction is assisted by a reduction system comprising DPH3 and a NADH-dependent reductase. Acts as a tumor suppressor. The polypeptide is 2-(3-amino-3-carboxypropyl)histidine synthase subunit 1 (Mus musculus (Mouse)).